Reading from the N-terminus, the 128-residue chain is Small ribosomal subunit protein uS8c (128 aa).

This sequence belongs to the universal ribosomal protein uS8 family. In terms of assembly, part of the 30S ribosomal subunit.

It localises to the plastid. The protein localises to the chloroplast. Functionally, one of the primary rRNA binding proteins, it binds directly to 16S rRNA central domain where it helps coordinate assembly of the platform of the 30S subunit. In Gnetum parvifolium (Small-leaved jointfir), this protein is Small ribosomal subunit protein uS8c (rps8).